The sequence spans 120 residues: Piercer of microtubule wall 2 protein (120 aa).

Over residues 1-10 (MTECDWEKKS) the composition is skewed to basic and acidic residues. Positions 1-25 (MTECDWEKKSTSASNSDTEMKPELP) are disordered.

The protein belongs to the PIERCE2 family. In terms of assembly, microtubule inner protein component of sperm flagellar doublet microtubules. Interacts with CFAP53, ODAD1 and ODAD3; the interactions link the outer dynein arms docking complex (ODA-DC) to the internal microtubule inner proteins (MIP) in cilium axoneme. In terms of tissue distribution, expressed in trachea multiciliated cells.

Its subcellular location is the cytoplasm. It is found in the cytoskeleton. It localises to the cilium axoneme. The protein resides in the flagellum axoneme. Functionally, microtubule inner protein involved in the attachment of outer dynein arms (ODAs) to dynein-decorated doublet microtubules (DMTs) in cilia axoneme, which is required for motile cilia beating. This chain is Piercer of microtubule wall 2 protein (PIERCE2), found in Bos taurus (Bovine).